Consider the following 234-residue polypeptide: Sugar fermentation stimulation protein homolog (234 aa).

This sequence belongs to the SfsA family.

The chain is Sugar fermentation stimulation protein homolog from Edwardsiella ictaluri (strain 93-146).